The primary structure comprises 426 residues: Enolase (426 aa).

Q165 contributes to the (2R)-2-phosphoglycerate binding site. Residue E209 is the Proton donor of the active site. Mg(2+) is bound by residues D244, E287, and D313. 4 residues coordinate (2R)-2-phosphoglycerate: K338, R367, S368, and K389. Catalysis depends on K338, which acts as the Proton acceptor.

The protein belongs to the enolase family. Requires Mg(2+) as cofactor.

It localises to the cytoplasm. It is found in the secreted. The protein resides in the cell surface. It carries out the reaction (2R)-2-phosphoglycerate = phosphoenolpyruvate + H2O. The protein operates within carbohydrate degradation; glycolysis; pyruvate from D-glyceraldehyde 3-phosphate: step 4/5. Its function is as follows. Catalyzes the reversible conversion of 2-phosphoglycerate (2-PG) into phosphoenolpyruvate (PEP). It is essential for the degradation of carbohydrates via glycolysis. This chain is Enolase, found in Methanococcus maripaludis (strain DSM 14266 / JCM 13030 / NBRC 101832 / S2 / LL).